We begin with the raw amino-acid sequence, 295 residues long: Protoheme IX farnesyltransferase (295 aa).

7 helical membrane-spanning segments follow: residues 43-63, 92-112, 114-134, 140-160, 166-186, 231-251, and 272-292; these read PIQL…VAAL, SAFV…YALV, PLAA…YTPA, WSTE…WSAG, ALGW…FMAV, LLWG…GLWF, and FFAS…DRLF.

It belongs to the UbiA prenyltransferase family. Protoheme IX farnesyltransferase subfamily.

Its subcellular location is the cell inner membrane. The enzyme catalyses heme b + (2E,6E)-farnesyl diphosphate + H2O = Fe(II)-heme o + diphosphate. Its pathway is porphyrin-containing compound metabolism; heme O biosynthesis; heme O from protoheme: step 1/1. Converts heme B (protoheme IX) to heme O by substitution of the vinyl group on carbon 2 of heme B porphyrin ring with a hydroxyethyl farnesyl side group. This Opitutus terrae (strain DSM 11246 / JCM 15787 / PB90-1) protein is Protoheme IX farnesyltransferase.